The chain runs to 202 residues: Orotate phosphoribosyltransferase (202 aa).

Residues lysine 93 and 113–121 (EDIITTGGS) contribute to the 5-phospho-alpha-D-ribose 1-diphosphate site. 2 residues coordinate orotate: threonine 117 and arginine 145.

It belongs to the purine/pyrimidine phosphoribosyltransferase family. PyrE subfamily. As to quaternary structure, homodimer. It depends on Mg(2+) as a cofactor.

The enzyme catalyses orotidine 5'-phosphate + diphosphate = orotate + 5-phospho-alpha-D-ribose 1-diphosphate. Its pathway is pyrimidine metabolism; UMP biosynthesis via de novo pathway; UMP from orotate: step 1/2. Catalyzes the transfer of a ribosyl phosphate group from 5-phosphoribose 1-diphosphate to orotate, leading to the formation of orotidine monophosphate (OMP). This chain is Orotate phosphoribosyltransferase, found in Campylobacter curvus (strain 525.92).